The sequence spans 200 residues: Large ribosomal subunit protein uL4c (200 aa).

The disordered stretch occupies residues 45–71 (RAEIRGGGRKPWKQKGTGRARAGSRRS). Over residues 51–68 (GGRKPWKQKGTGRARAGS) the composition is skewed to basic residues.

Belongs to the universal ribosomal protein uL4 family. In terms of assembly, part of the 50S ribosomal subunit.

The protein resides in the plastid. Its subcellular location is the chloroplast. Probably binds the 23S rRNA. This Cyanidioschyzon merolae (strain NIES-3377 / 10D) (Unicellular red alga) protein is Large ribosomal subunit protein uL4c (rpl4).